Here is a 159-residue protein sequence, read N- to C-terminus: Protein Smg homolog (159 aa).

This sequence belongs to the Smg family.

The polypeptide is Protein Smg homolog (Vibrio vulnificus (strain CMCP6)).